Here is a 229-residue protein sequence, read N- to C-terminus: Coiled-coil domain-containing protein 134 (229 aa).

The first 22 residues, 1-22, serve as a signal peptide directing secretion; that stretch reads MDLLQFLAAFSVLLWPGTEVTG. N148 carries N-linked (GlcNAc...) asparagine glycosylation. The tract at residues 182–229 is disordered; sequence FKTDQTEFIPSTDPFQKALREEEKRRKKEERRKEIRKGPRISRSQSEL. Residues 196–218 are a coiled coil; it reads FQKALREEEKRRKKEERRKEIRK. Residues 226-229 carry the Prevents secretion from ER motif; the sequence is QSEL.

This sequence belongs to the CCDC134 family. As to quaternary structure, interacts with TADA2A. Associates with the PCAF complex via TADA2A binding. Post-translationally, O-glycosylated, with additional sialic acid modifications.

It localises to the endoplasmic reticulum lumen. Its subcellular location is the secreted. The protein resides in the cytoplasm. The protein localises to the nucleus. Molecular adapter required to prevent protein hyperglycosylation of HSP90B1: during translation, associates with nascent HSP90B1 and the STT3A catalytic component of the OST-A complex and tethers them to a specialized translocon that forms a microenvironment for HSP90B1 folding. In the CCDC134-containing translocon, STT3A associates with the SRT pseudosubstrate motif of HSP90B1, preventing access to facultative glycosylation sites until folding is completed, preventing hyperglycosylation and subsequent degradation of HSP90B1. In extracellular secreted form, promotes proliferation and activation of CD8(+) T-cells, suggesting a cytokine-like function. May inhibit ERK and JNK signaling activity. May suppress cell migration and invasion activity, via its effects on ERK and JNK signaling. May also localize in the nucleus: enhances stability of the PCAF histone acetyltransferase (HAT) complex member TADA2A and thus promotes PCAF-mediated histone acetyltransferase activity. Has a critical role in the regulation of osteogenesis and bone development. This Mus musculus (Mouse) protein is Coiled-coil domain-containing protein 134 (Ccdc134).